The following is a 387-amino-acid chain: Intraflagellar transport protein 57 (387 aa).

The protein belongs to the IFT57 family.

It is found in the cell projection. The protein localises to the cilium. Its subcellular location is the flagellum. The protein resides in the cytoplasm. It localises to the cytoskeleton. It is found in the flagellum axoneme. The protein localises to the flagellum basal body. Functionally, component of the intraflagellar transport complex B (IFT-B) involved in flagellar assembly. The sequence is that of Intraflagellar transport protein 57 from Giardia intestinalis (strain ATCC 50803 / WB clone C6) (Giardia lamblia).